Consider the following 65-residue polypeptide: Large ribosomal subunit protein bL35 (65 aa).

Basic residues predominate over residues 1 to 45; the sequence is MPKMKSHSGAKKRFKKTGNGKIKRKKANKGHLLTKKNAKRKRQLR. Residues 1-65 form a disordered region; that stretch reads MPKMKSHSGA…RDRIKRMLST (65 aa). Over residues 48 to 57 the composition is skewed to basic and acidic residues; it reads VVVDDKANRD.

Belongs to the bacterial ribosomal protein bL35 family.

This chain is Large ribosomal subunit protein bL35, found in Salinibacter ruber (strain DSM 13855 / M31).